A 689-amino-acid chain; its full sequence is MNFENLLIELGTEELPPKSLRKLAESFLANLTEELTKADLAFSSAVWYAAPRRLAINVTELALAQADKVVEKRGPAVSSAFDAEGKPTKAAEGWARGNGITVEQAERLVTDKGEWLVHNAKVEGVETKNLIAAMAQRALDKLPIPKPMRWGNNKTQFIRPVHTATMLLGSELIEGELLGIKSARTVRGHRFMGLKQFELAHADHYLTDLKEKGKVIADYESRKALIKADAEKAAAKIGGTADIEDSLLEEVASLVEWPVVLTASFEEKFLSVPSEALVYTMKGDQKYFPVFDDAGKLLPNFIFVTNIESKDPAQIISGNEKVVRPRLADAEFFFNTDKKHTLESRLPSLETVLFQQQLGTLKDKVNRISALAAFIAEQTGANAVDAARAGLLSKTDLMTNMVMEFTDTQGTMGMHYARLDGETEAVAVAMEEQYKPRFSGDTVPSAGVSCAVALADKLDTLVGIFGIGQAPKGAADPFALRRAAIGVLRIIVENKLPLDLVDLITKAQALHGTNLSNANASDEVLEFLMARFRAWYQDKGIGVDVILAVLARRPTRPADFDSRINAVSHFRSLEASSALAAANKRVSNILAKVEGALPTTINASLLTEAAEQALAAKLNELQPLLAPLFANADYQQALTLLAGLRESVDQFFEDVMVMADDEALKNNRLALLNNLREQFLHVADISLLQ.

This sequence belongs to the class-II aminoacyl-tRNA synthetase family. In terms of assembly, tetramer of two alpha and two beta subunits.

The protein localises to the cytoplasm. It carries out the reaction tRNA(Gly) + glycine + ATP = glycyl-tRNA(Gly) + AMP + diphosphate. This Shewanella baltica (strain OS155 / ATCC BAA-1091) protein is Glycine--tRNA ligase beta subunit.